Here is a 669-residue protein sequence, read N- to C-terminus: MSKEIAKKRIEELRDLLNTFNYQYHVLDNPSVSDAEYDRNMQELIKLEAENPEFMSEDSPSVRVGGTVLDIFEKVTHKSPMLSLGNAFNEGDLRDFDRRVRQGIDDANVRYICELKIDGLAVSLHYEKGRFIQGATRGDGVTGEDITQNLKTIKAIPLRLNEEVTLEARGEAYMPKRSFVKLNEEKEQNGEDVFANPRNAAAGSIRQLDPKIAAKRNLSMFVYGLANVEEKTILSHSESLDFLGELGFKTNPNRRTCETIEEVIAYVEEWQEKRPHLDYEIDGIVIKVDDVALQESLGTTAKSPRWAIAYKFPAEEVVTRLTGIELSVGRTGVVTPTAELEPVRVAGTIVRRASLHNEDLIREKDIRIGDYVVVKKAGDIIPEVVNVLFDKRTGEEEEYHMPTHCPACESELVRLEEEVALRCINPTCPAQIREGLIHFVSRNAMNIDGLGERVITQLFEADYIRTFADLYSLTKEQLLQLERFGEKSATNLVQAIENSKENSLERLLFGLGIRHVGAKAARTFAEHFETMDALVKATEEELKAINEIGEKMAQSVVAYFDNEDVLELLQQFKEYGVNMTYKGMKIADLQNVESYFAGKTVVLTGKLEVMGRSEAKKKIEALGGKVTGSVSKSTDLVVAGEAAGSKLAQAEKHNVEVWNEERFLQELNK.

NAD(+) contacts are provided by residues 34 to 38 (DAEYD), 83 to 84 (SL), and Glu114. Lys116 acts as the N6-AMP-lysine intermediate in catalysis. Residues Arg137, Glu171, Lys287, and Lys311 each contribute to the NAD(+) site. Zn(2+) contacts are provided by Cys405, Cys408, Cys423, and Cys428. Positions 591–669 (NVESYFAGKT…EERFLQELNK (79 aa)) constitute a BRCT domain.

It belongs to the NAD-dependent DNA ligase family. LigA subfamily. Requires Mg(2+) as cofactor. The cofactor is Mn(2+).

It carries out the reaction NAD(+) + (deoxyribonucleotide)n-3'-hydroxyl + 5'-phospho-(deoxyribonucleotide)m = (deoxyribonucleotide)n+m + AMP + beta-nicotinamide D-nucleotide.. In terms of biological role, DNA ligase that catalyzes the formation of phosphodiester linkages between 5'-phosphoryl and 3'-hydroxyl groups in double-stranded DNA using NAD as a coenzyme and as the energy source for the reaction. It is essential for DNA replication and repair of damaged DNA. This Bacillus cereus (strain AH187) protein is DNA ligase.